The following is a 132-amino-acid chain: Small ribosomal subunit protein uS8 (132 aa).

The protein belongs to the universal ribosomal protein uS8 family. In terms of assembly, part of the 30S ribosomal subunit. Contacts proteins S5 and S12.

Its function is as follows. One of the primary rRNA binding proteins, it binds directly to 16S rRNA central domain where it helps coordinate assembly of the platform of the 30S subunit. The chain is Small ribosomal subunit protein uS8 from Natranaerobius thermophilus (strain ATCC BAA-1301 / DSM 18059 / JW/NM-WN-LF).